Here is a 112-residue protein sequence, read N- to C-terminus: Putative pterin-4-alpha-carbinolamine dehydratase (112 aa).

The protein belongs to the pterin-4-alpha-carbinolamine dehydratase family.

The enzyme catalyses (4aS,6R)-4a-hydroxy-L-erythro-5,6,7,8-tetrahydrobiopterin = (6R)-L-erythro-6,7-dihydrobiopterin + H2O. The protein is Putative pterin-4-alpha-carbinolamine dehydratase of Shewanella woodyi (strain ATCC 51908 / MS32).